Consider the following 363-residue polypeptide: Holliday junction branch migration complex subunit RuvB (363 aa).

The interval 1-32 is disordered; sequence MAIQTDSFAAAPAPSSGSTRRLISAAPTSPNE. The segment covering 7-18 has biased composition (low complexity); the sequence is SFAAAPAPSSGS. A large ATPase domain (RuvB-L) region spans residues 13-200; that stretch reads APSSGSTRRL…FGIVARLEFY (188 aa). Residues Leu-39, Arg-40, Gly-81, Lys-84, Thr-85, Thr-86, 147–149, Arg-190, Tyr-200, and Arg-237 contribute to the ATP site; that span reads EDY. Thr-85 contacts Mg(2+). Residues 201–271 form a small ATPAse domain (RuvB-S) region; the sequence is TPEELVRIVT…IAELALTMLD (71 aa). Residues 274–363 are head domain (RuvB-H); sequence PRGFDVMDRK…GPVGSDLFEG (90 aa). Positions 329 and 334 each coordinate DNA.

It belongs to the RuvB family. In terms of assembly, homohexamer. Forms an RuvA(8)-RuvB(12)-Holliday junction (HJ) complex. HJ DNA is sandwiched between 2 RuvA tetramers; dsDNA enters through RuvA and exits via RuvB. An RuvB hexamer assembles on each DNA strand where it exits the tetramer. Each RuvB hexamer is contacted by two RuvA subunits (via domain III) on 2 adjacent RuvB subunits; this complex drives branch migration. In the full resolvosome a probable DNA-RuvA(4)-RuvB(12)-RuvC(2) complex forms which resolves the HJ.

It is found in the cytoplasm. The catalysed reaction is ATP + H2O = ADP + phosphate + H(+). Its function is as follows. The RuvA-RuvB-RuvC complex processes Holliday junction (HJ) DNA during genetic recombination and DNA repair, while the RuvA-RuvB complex plays an important role in the rescue of blocked DNA replication forks via replication fork reversal (RFR). RuvA specifically binds to HJ cruciform DNA, conferring on it an open structure. The RuvB hexamer acts as an ATP-dependent pump, pulling dsDNA into and through the RuvAB complex. RuvB forms 2 homohexamers on either side of HJ DNA bound by 1 or 2 RuvA tetramers; 4 subunits per hexamer contact DNA at a time. Coordinated motions by a converter formed by DNA-disengaged RuvB subunits stimulates ATP hydrolysis and nucleotide exchange. Immobilization of the converter enables RuvB to convert the ATP-contained energy into a lever motion, pulling 2 nucleotides of DNA out of the RuvA tetramer per ATP hydrolyzed, thus driving DNA branch migration. The RuvB motors rotate together with the DNA substrate, which together with the progressing nucleotide cycle form the mechanistic basis for DNA recombination by continuous HJ branch migration. Branch migration allows RuvC to scan DNA until it finds its consensus sequence, where it cleaves and resolves cruciform DNA. This chain is Holliday junction branch migration complex subunit RuvB, found in Leptothrix cholodnii (strain ATCC 51168 / LMG 8142 / SP-6) (Leptothrix discophora (strain SP-6)).